Here is a 307-residue protein sequence, read N- to C-terminus: Probable porphobilinogen deaminase (307 aa).

An S-(dipyrrolylmethanemethyl)cysteine modification is found at cysteine 240.

Belongs to the HMBS family. It depends on dipyrromethane as a cofactor.

The catalysed reaction is 4 porphobilinogen + H2O = hydroxymethylbilane + 4 NH4(+). It functions in the pathway porphyrin-containing compound metabolism; protoporphyrin-IX biosynthesis; coproporphyrinogen-III from 5-aminolevulinate: step 2/4. Its function is as follows. Tetrapolymerization of the monopyrrole PBG into the hydroxymethylbilane pre-uroporphyrinogen in several discrete steps. In Aeropyrum pernix (strain ATCC 700893 / DSM 11879 / JCM 9820 / NBRC 100138 / K1), this protein is Probable porphobilinogen deaminase (hemC).